Here is a 407-residue protein sequence, read N- to C-terminus: Protein ZNF365 (407 aa).

Ser16 bears the Phosphoserine mark. The segment at 26-51 (FRCPRCGDHTRFRSLSSLRAHLEFSH) adopts a C2H2-type; degenerate zinc-finger fold. Ser138 is subject to Phosphoserine. The stretch at 169–296 (VEAVDRTIEK…KQLEYYQSQQ (128 aa)) forms a coiled coil. The residue at position 175 (Thr175) is a Phosphothreonine. The interval 347-392 (LKKAKDDRASMQPAKAIHEQAESSRDLCRPPKKGELLGFGRKGNIR) is disordered. Residues 362 to 381 (AIHEQAESSRDLCRPPKKGE) show a composition bias toward basic and acidic residues. Ser369 is subject to Phosphoserine.

Homodimers. Interacts with NDE1 and NDEL1. Interacts with DISC1. Interacts with PARP1. Interacts with MCRS1.

It is found in the cytoplasm. The protein localises to the cytoskeleton. It localises to the microtubule organizing center. The protein resides in the centrosome. Its function is as follows. Involved in the regulation of neurogenesis. Negatively regulates neurite outgrowth. Involved in the morphogenesis of basket cells in the somatosensory cortex during embryogenesis. Involved in the positive regulation of oligodendrocyte differentiation during postnatal growth. Involved in dendritic arborization, morphogenesis of spine density dendrite, and establishment of postsynaptic dendrite density in cortical pyramidal neurons. Involved in homologous recombination (HR) repair pathway. Required for proper resolution of DNA double-strand breaks (DSBs) by HR. Is required for recovery of stalled replication forks, and directly contributes to genomic stability. Interacts with PARP1 and mediates MRE11-dependent DNA end resection during replication fork recovery. Contributes to genomic stability by preventing telomere dysfunction. In Pongo abelii (Sumatran orangutan), this protein is Protein ZNF365 (ZNF365).